A 132-amino-acid polypeptide reads, in one-letter code: Acyl-CoA thioester hydrolase YciA (132 aa).

A HotDog ACOT-type domain is found at P8–E123.

Belongs to the acyl coenzyme A hydrolase family.

Catalyzes the hydrolysis of the thioester bond in palmitoyl-CoA and malonyl-CoA. This Escherichia coli O6:H1 (strain CFT073 / ATCC 700928 / UPEC) protein is Acyl-CoA thioester hydrolase YciA (yciA).